A 71-amino-acid chain; its full sequence is Large ribosomal subunit protein bL31 (71 aa).

4 residues coordinate Zn(2+): Cys16, Cys18, Cys37, and Cys40.

The protein belongs to the bacterial ribosomal protein bL31 family. Type A subfamily. Part of the 50S ribosomal subunit. Requires Zn(2+) as cofactor.

In terms of biological role, binds the 23S rRNA. The protein is Large ribosomal subunit protein bL31 of Pectobacterium atrosepticum (strain SCRI 1043 / ATCC BAA-672) (Erwinia carotovora subsp. atroseptica).